Consider the following 266-residue polypeptide: N-formylglutamate deformylase (266 aa).

It belongs to the N-formylglutamate deformylase family. As to quaternary structure, monomer.

It carries out the reaction N-formyl-L-glutamate + H2O = formate + L-glutamate. The protein operates within amino-acid degradation; L-histidine degradation into L-glutamate; L-glutamate from N-formimidoyl-L-glutamate (deiminase route): step 2/2. Functionally, catalyzes the hydrolysis of N-formyl-L-glutamate to formate and L-glutamate. Shows weak activity with N-formyl-L-glutamine. The polypeptide is N-formylglutamate deformylase (Pseudomonas aeruginosa (strain ATCC 15692 / DSM 22644 / CIP 104116 / JCM 14847 / LMG 12228 / 1C / PRS 101 / PAO1)).